The chain runs to 377 residues: UPF0754 membrane protein GK0639 (377 aa).

2 helical membrane passes run 7–27 and 357–377; these read LLFM…IAIV and YLGA…GLWL.

The protein belongs to the UPF0754 family.

Its subcellular location is the cell membrane. The chain is UPF0754 membrane protein GK0639 from Geobacillus kaustophilus (strain HTA426).